The primary structure comprises 85 residues: Large ribosomal subunit protein bL27 (85 aa).

A disordered region spans residues 1 to 21 (MAHKKAGGSTRNGRDSNAKRL).

It belongs to the bacterial ribosomal protein bL27 family.

The polypeptide is Large ribosomal subunit protein bL27 (Erwinia tasmaniensis (strain DSM 17950 / CFBP 7177 / CIP 109463 / NCPPB 4357 / Et1/99)).